Consider the following 768-residue polypeptide: Calcium up-regulated protein G (768 aa).

The tract at residues 1 to 22 (MINIEDISKSSNQSEEKQLKST) is disordered. Ricin B-type lectin domains lie at 1–107 (MINI…WTID) and 100–248 (KTQI…WGIN).

It belongs to the cup family.

It localises to the cytoplasm. Its subcellular location is the membrane. Functionally, may play an important role in stabilizing and/or regulating the cell membrane during Ca(2+) stress or certain stages of development. The sequence is that of Calcium up-regulated protein G (cupG) from Dictyostelium discoideum (Social amoeba).